Here is a 237-residue protein sequence, read N- to C-terminus: MPHIKRLLDVYIALQALFALSWGFSDPEPGPVAASQSNGDRFKIEGRAIVPGVKTQDWISTARVLVEGEEYVGFLKTDGSFAVNDVPSGSYVVEIVSPSFRFEPVRVDITSKGKMRARLVNYIKTSEVIRQPYPLQIRAGGPHTYFMKRETWGWTDFLMNPMVMMMVLPLLIIVLLPKVVNTNDPEMRKEMEQSMNMLNPNPELPDVSEFMTKLFSKGSSKSGGGNKGSRSVATKRR.

The N-terminal stretch at 1-23 (MPHIKRLLDVYIALQALFALSWG) is a signal peptide. Residues 24–156 (FSDPEPGPVA…MKRETWGWTD (133 aa)) are Lumenal-facing. Residues 157 to 177 (FLMNPMVMMMVLPLLIIVLLP) form a helical membrane-spanning segment. Residues 178–237 (KVVNTNDPEMRKEMEQSMNMLNPNPELPDVSEFMTKLFSKGSSKSGGGNKGSRSVATKRR) lie on the Cytoplasmic side of the membrane. Residues 215–237 (FSKGSSKSGGGNKGSRSVATKRR) are disordered.

It belongs to the EMC7 family. In terms of assembly, component of the ER membrane protein complex (EMC).

The protein resides in the endoplasmic reticulum membrane. Its function is as follows. Part of the endoplasmic reticulum membrane protein complex (EMC) that enables the energy-independent insertion into endoplasmic reticulum membranes of newly synthesized membrane proteins. Preferentially accommodates proteins with transmembrane domains that are weakly hydrophobic or contain destabilizing features such as charged and aromatic residues. Involved in the cotranslational insertion of multi-pass membrane proteins in which stop-transfer membrane-anchor sequences become ER membrane spanning helices. It is also required for the post-translational insertion of tail-anchored/TA proteins in endoplasmic reticulum membranes. By mediating the proper cotranslational insertion of N-terminal transmembrane domains in an N-exo topology, with translocated N-terminus in the lumen of the ER, controls the topology of multi-pass membrane proteins like the G protein-coupled receptors. By regulating the insertion of various proteins in membranes, it is indirectly involved in many cellular processes. In Danio rerio (Zebrafish), this protein is Endoplasmic reticulum membrane protein complex subunit 7 (emc7).